A 433-amino-acid chain; its full sequence is Myricetin 3-O-glucosyl 1,2-rhamnoside 6'-O-caffeoyltransferase AT2 (433 aa).

Residues His-157 and Asp-375 each act as proton acceptor in the active site.

Belongs to the plant acyltransferase family. Expressed in young cromes.

It catalyses the reaction myricetin 3-O-[beta-D-glucosyl-(1-&gt;2)-alpha-L-rhamnoside] + (E)-caffeoyl-CoA = myricetin 3-O-[(6-O-(E)-caffeoyl-beta-D-glucosyl)-(1-&gt;2)-alpha-L-rhamnoside] + CoA. The protein operates within flavonoid metabolism. Its function is as follows. Caffeoyltransferase involved in montbretin A (MbA) biosynthesis. Catalyzes the caffeoylation of myricetin 3-O-beta-D-glucosyl 1,2-alpha-L-rhamnoside (MRG) to produce myricetin 3-O-(6'-O-caffeoyl)-beta-D-glucosyl 1,2-alpha-L-rhamnoside (mini-MbA), a precursor of MbA. Mini-MbA and MbA are potent inhibitors of human pancreatic alpha-amylase and are being developed as drug candidates to treat type-2 diabetes. In vitro, is able to catalyze the caffeoylation of quercetin 3-O-sophoroside (QGG), although QGG may not be a physiological substrate in vivo. In vitro, can use coumaryl-CoA, feruloyl-CoA and acetyl-CoA, although these three acyl donors may not be physiological in vivo. In Crocosmia x crocosmiiflora (Montbretia), this protein is Myricetin 3-O-glucosyl 1,2-rhamnoside 6'-O-caffeoyltransferase AT2.